The chain runs to 119 residues: uncharacterized protein (119 aa).

Residues M1–L20 are disordered. The helical transmembrane segment at L74–W94 threads the bilayer.

The protein resides in the membrane. This is an uncharacterized protein from Saccharomyces cerevisiae (strain ATCC 204508 / S288c) (Baker's yeast).